Consider the following 99-residue polypeptide: Class II hydrophobin 2 (99 aa).

A signal peptide spans 1–15 (MKFFVVAALFAGALA). Disulfide bonds link Cys-30/Cys-79 and Cys-40/Cys-70.

The protein belongs to the cerato-ulmin hydrophobin family. Homotetramer. Further self-assembles to form highly ordered films at water-air interfaces through intermolecular interactions.

The protein resides in the secreted. The protein localises to the cell wall. In terms of biological role, aerial growth, conidiation, and dispersal of filamentous fungi in the environment rely upon a capability of their secreting small amphipathic proteins called hydrophobins (HPBs) with low sequence identity. Class I can self-assemble into an outermost layer of rodlet bundles on aerial cell surfaces, conferring cellular hydrophobicity that supports fungal growth, development and dispersal; whereas Class II form highly ordered films at water-air interfaces through intermolecular interactions but contribute nothing to the rodlet structure. HYD2 is a class II hydrophobin that contributes to the fruiting body development. This Cordyceps militaris (Caterpillar fungus) protein is Class II hydrophobin 2.